A 286-amino-acid chain; its full sequence is UDP-3-O-acyl-N-acetylglucosamine deacetylase (286 aa).

Residues His79, His237, and Asp241 each coordinate Zn(2+). His264 (proton donor) is an active-site residue.

Belongs to the LpxC family. Requires Zn(2+) as cofactor.

It carries out the reaction a UDP-3-O-[(3R)-3-hydroxyacyl]-N-acetyl-alpha-D-glucosamine + H2O = a UDP-3-O-[(3R)-3-hydroxyacyl]-alpha-D-glucosamine + acetate. Its pathway is glycolipid biosynthesis; lipid IV(A) biosynthesis; lipid IV(A) from (3R)-3-hydroxytetradecanoyl-[acyl-carrier-protein] and UDP-N-acetyl-alpha-D-glucosamine: step 2/6. Catalyzes the hydrolysis of UDP-3-O-myristoyl-N-acetylglucosamine to form UDP-3-O-myristoylglucosamine and acetate, the committed step in lipid A biosynthesis. The sequence is that of UDP-3-O-acyl-N-acetylglucosamine deacetylase from Chlamydia trachomatis serovar L2 (strain ATCC VR-902B / DSM 19102 / 434/Bu).